Reading from the N-terminus, the 508-residue chain is Endo-4-O-sulfatase (508 aa).

A 3-oxoalanine (Ser) modification is found at Ser-84.

The protein belongs to the sulfatase family. In terms of processing, the conversion to 3-oxoalanine (also known as C-formylglycine, FGly), of a serine or cysteine residue in prokaryotes and of a cysteine residue in eukaryotes, is critical for catalytic activity.

Its function is as follows. Endosulfatase involved in the degradation of the glycosaminoglycans (GAGs) chondroitin sulfate (CS) and dermatan sulfate (DS). Efficiently hydrolyzes sulfate groups from a broad range of substrate size, including disaccharide to high molecular weight CS and DS polymers. Has a strict specificity for the 4-O-sulfate groups of galactosamine. GAG-specific sulfatases play a key role in the persistence of the major human gut symbiont B.thetaiotaomicron in the host gastrointestinal tract. This chain is Endo-4-O-sulfatase, found in Bacteroides thetaiotaomicron (strain ATCC 29148 / DSM 2079 / JCM 5827 / CCUG 10774 / NCTC 10582 / VPI-5482 / E50).